Consider the following 381-residue polypeptide: Stearoyl-[acyl-carrier-protein] 9-desaturase 1, chloroplastic (381 aa).

The N-terminal 26 residues, 1–26 (MQVVGTVRVSGCGAVVAPSRRQCRVS), are a transit peptide targeting the chloroplast. 6 residues coordinate Fe cation: Glu-120, Glu-158, His-161, Glu-211, Glu-244, and His-247.

The protein belongs to the fatty acid desaturase type 2 family. As to quaternary structure, homodimer. Requires Fe(2+) as cofactor.

It is found in the plastid. It localises to the chloroplast. The catalysed reaction is octadecanoyl-[ACP] + 2 reduced [2Fe-2S]-[ferredoxin] + O2 + 2 H(+) = (9Z)-octadecenoyl-[ACP] + 2 oxidized [2Fe-2S]-[ferredoxin] + 2 H2O. The protein operates within lipid metabolism; fatty acid metabolism. In terms of biological role, converts stearoyl-ACP to oleoyl-ACP by introduction of a cis double bond between carbons 9 and 10 of the acyl chain. This Oryza sativa subsp. indica (Rice) protein is Stearoyl-[acyl-carrier-protein] 9-desaturase 1, chloroplastic.